A 315-amino-acid chain; its full sequence is Rhomboid-related protein 4 (315 aa).

Topologically, residues 1-21 are cytoplasmic; the sequence is MQRRTRGINTGLLLLLSQVFQ. Residues 22–42 traverse the membrane as a helical segment; sequence IGINNIPPVTLATLAVNVWFF. Over 43-103 the chain is Lumenal; the sequence is LNPWKPLYHS…KLERRLGSRW (61 aa). Residues 104–124 form a helical membrane-spanning segment; the sequence is FAYVIATFSLLTGVVYLLLQF. The Cytoplasmic portion of the chain corresponds to 125–137; the sequence is TVAELLNQPDFKR. A helical transmembrane segment spans residues 138 to 154; it reads NCAVGFSGVLFALKVLS. The active-site Nucleophile is the serine 144. Residues 155-180 are Lumenal-facing; sequence NHYCPGGFVNILGFPVPNRFACWAEL. Residues 181-201 form a helical membrane-spanning segment; the sequence is VAIHFCTPGTSFAGHLAGILV. The active site involves histidine 195. Residues 202–315 lie on the Cytoplasmic side of the membrane; the sequence is GLMYTQGPLK…RQRLHRFDGQ (114 aa). Residues 269–284 form a ubiquitin-binding domain (UBD) region; sequence SEEEQLERALRASIWD. The VCP/p97-interacting motif (VIM) stretch occupies residues 301 to 315; the sequence is PEEMRRQRLHRFDGQ.

Belongs to the peptidase S54 family. In terms of assembly, interacts with BIK and STEAP3. Interacts (via C-terminal domain) with VCP/P97. Interacts with ubiquitin and ubiquitinated proteins. Expressed in testis (at protein level). Expressed in intestine, lung, brain, kidney, epididymis, stomach, muscle, spleen, liver, heart and testis.

It is found in the endoplasmic reticulum membrane. The protein resides in the mitochondrion membrane. It catalyses the reaction Cleaves type-1 transmembrane domains using a catalytic dyad composed of serine and histidine that are contributed by different transmembrane domains.. With respect to regulation, inhibited by aprotinin. Functionally, intramembrane-cleaving serine protease that cleaves single transmembrane or multi-pass membrane proteins in the hydrophobic plane of the membrane, luminal loops and juxtamembrane regions. Involved in regulated intramembrane proteolysis and the subsequent release of functional polypeptides from their membrane anchors. Functional component of endoplasmic reticulum-associated degradation (ERAD) for misfolded membrane proteins. Required for the degradation process of some specific misfolded endoplasmic reticulum (ER) luminal proteins. Participates in the transfer of misfolded proteins from the ER to the cytosol, where they are destroyed by the proteasome in a ubiquitin-dependent manner. Functions in BIK, MPZ, PKD1, PTCRA, RHO, STEAP3 and TRAC processing. Involved in the regulation of exosomal secretion; inhibits the TSAP6-mediated secretion pathway. Involved in the regulation of apoptosis; modulates BIK-mediated apoptotic activity. Also plays a role in the regulation of spermatogenesis; inhibits apoptotic activity in spermatogonia. The chain is Rhomboid-related protein 4 (Rhbdd1) from Mus musculus (Mouse).